The chain runs to 449 residues: MYSQQPFPAFAFNAGLMQDPANCHFGGYTGLGHPQPFSFAFSTLKSENGESGVQGMGDCTTPVMPWNSLASFDHQVQMENNQQGNPPRAPSPTLSDSRIKVKEEVVHETDSGEESPEPKYPSPPNPSLYYPNAWTGAPFWQVNPTPGNNINPMPNQTLVKNTSLPGNTTYPTPANQSPNTPVDCVTSSMESSRCSSTNSPNGAINERATTIPNGEMLDGGQSSDNEEEVPSESEMEQFAKDLKHKRVSLGYTQADVGYALGVLYGKMFSQTTICRFESLQLSFKNMCQLKPFLERWVVEAENNDNLQELINREQVIAQTRKRKRRTNIENIVKGTLESYFMKCPKPGAQEMVQIAKELNMDKDVVRVWFCNRRQKGKRQGMPTVEENDGEGYDVAQTMGSPPVGHYALQQVVTPQGYMAAPQIYASAFHKNDLFPQTVPHGMAMGGHIG.

2 disordered regions span residues 79–125 (ENNQ…SPPN) and 170–233 (YPTP…PSES). Residues 97 to 110 (SRIKVKEEVVHETD) show a composition bias toward basic and acidic residues. Residues 170-180 (YPTPANQSPNT) show a composition bias toward polar residues. Low complexity predominate over residues 187–199 (SSMESSRCSSTNS). A compositionally biased stretch (acidic residues) spans 224–233 (DNEEEVPSES). Residues 227-301 (EEVPSESEME…FLERWVVEAE (75 aa)) enclose the POU-specific domain. The homeobox DNA-binding region spans 321-380 (KRKRRTNIENIVKGTLESYFMKCPKPGAQEMVQIAKELNMDKDVVRVWFCNRRQKGKRQG).

Belongs to the POU transcription factor family. Class-5 subfamily. As to quaternary structure, interacts with components of the transcription complex that assembles on the vent2-B gene, including vent2 (via C-terminus), smad1 and smad4. Forms a repression complex on the promoters of the gsc and mix2 genes via interactions with the nodal/activin signaling pathway transducers foxh1/fast1, gtf2ird1/wbscr11 and smad2. Forms a repression complex on the promoters of the nodal/nr1 and siamois genes with the maternal factors tcf7l1/tcf3 and vegt. In terms of tissue distribution, highly enriched within the animal half of developing embryos within ectodermal and mesodermal regions. Expressed in the neuroectoderm at the early neurula stage, with expression initially extending to the future hindbrain/midbrain boundary, but later shifting toward the posterior pole where it persists within the tip of the tail in hatching embryos. Expressed at very low levels in the adult kidney.

It localises to the nucleus. Its function is as follows. Transcription factor that binds to the octamer motif (5'-ATTTGCAT-3'). Activates transcription when directly bound to the octamer DNA sequence, but can form repression complexes with other proteins at the promoter site to inhibit transcription. Binds to the promoter of the vent2-B gene to activate transcription when in the presence of other BMP signaling factors also bound to the promoter. Inhibits the competence of ectodermal cells to respond to BMP during embryogenesis thereby inhibiting epidermal differentiation and promoting neural induction. Antagonizes the activity of nodal/activin signaling by forming a transcriptional repression complex on the gsc and mix2 gene promoters to inhibit their transcription, and thus maintain the undifferentiated state of embryonic cells to prevent them from differentiating prematurely. Acts maternally to inhibit vegt and beta-catenin-activated gene transcription by forming a transcriptional repression complex on the nodal/nr1 and siamois promoters to inhibit their transcription. The sequence is that of POU domain, class 5, transcription factor 1.1 (pou5f1.1) from Xenopus laevis (African clawed frog).